Consider the following 494-residue polypeptide: Sphingosine-1-phosphate transporter MFSD2B (494 aa).

A compositionally biased stretch (pro residues) spans 1 to 12; sequence MSVPHGPTPAPV. A disordered region spans residues 1 to 26; it reads MSVPHGPTPAPVAEPHTQEPGSDKRD. Transmembrane regions (helical) follow at residues 103 to 123, 140 to 160, 179 to 199, 223 to 243, 277 to 297, 310 to 330, 339 to 359, 360 to 380, 402 to 422, and 449 to 469; these read LMPWALGCMPLIALAYFFLWF, CLFQALATFFQVPYTALTMIL, MAGTLMGATVHGLIVSSAHGS, IAAAVVALTYPVCGSLLCLGV, VVSFLFISAAVQVEQSYLVLF, NLVLIILVSAVLSTPLWEWVL, AFGICVMVPFSILLAAVPSAP, VAYVVAFVSGVSIAVSLLLPW, TIFYSSYVFFTKLSGAGALGI, and VLIGAVPTCMILIGLCILLVG. The interval 473-494 is disordered; it reads KMPRQDTSSQLSLRRRTSYSLA. Residues 485 to 494 show a composition bias toward basic residues; the sequence is LRRRTSYSLA.

The protein belongs to the major facilitator superfamily. As to expression, widely expressed with highest expression in spleen, lung and testis. Predominantly expressed in erythroid lineages giving rise to erythrocytes and platelets, but absent in lymphoid lineages.

Its subcellular location is the cell membrane. The catalysed reaction is sphing-4-enine 1-phosphate(in) = sphing-4-enine 1-phosphate(out). It catalyses the reaction sphinganine 1-phosphate(in) = sphinganine 1-phosphate(out). The enzyme catalyses sphinga-4E,14Z-dienine-1-phosphate(in) = sphinga-4E,14Z-dienine-1-phosphate(out). Functionally, lipid transporter that specifically mediates export of sphingosine-1-phosphate in red blood cells and platelets. Sphingosine-1-phosphate is a signaling sphingolipid and its export from red blood cells into in the plasma is required for red blood cell morphology. Sphingosine-1-phosphate export from platelets is required for platelet aggregation and thrombus formation. Mediates the export of different sphingosine-1-phosphate (S1P) species, including S1P(d18:0) (sphinganine 1-phosphate), S1P (d18:1) (sphing-4-enine 1-phosphate) and S1P (d18:2) (sphinga-4E,14Z-dienine-1-phosphate). Release of sphingosine-1-phosphate is facilitated by a proton gradient. In contrast, cations, such as sodium, are not required to drive sphingosine-1-phosphate transport. In addition to export, also able to mediate S1P import. Does not transport lysophosphatidylcholine (LPC). In Mus musculus (Mouse), this protein is Sphingosine-1-phosphate transporter MFSD2B.